A 384-amino-acid polypeptide reads, in one-letter code: Galactokinase (384 aa).

35–38 (EHTD) serves as a coordination point for substrate. Residues Ser69 and 125 to 131 (GAGLSSS) each bind ATP. The Mg(2+) site is built by Ser131 and Glu163. The Proton acceptor role is filled by Asp175. Tyr224 is a binding site for substrate.

This sequence belongs to the GHMP kinase family. GalK subfamily.

The protein resides in the cytoplasm. It catalyses the reaction alpha-D-galactose + ATP = alpha-D-galactose 1-phosphate + ADP + H(+). The protein operates within carbohydrate metabolism; galactose metabolism. Functionally, catalyzes the transfer of the gamma-phosphate of ATP to D-galactose to form alpha-D-galactose-1-phosphate (Gal-1-P). This Aliivibrio fischeri (strain ATCC 700601 / ES114) (Vibrio fischeri) protein is Galactokinase.